A 108-amino-acid chain; its full sequence is Ig kappa chain V region BS-5 (108 aa).

Residues 1 to 23 (DVVMTQTPASVSEPVGGTVTIKC) form a framework-1 region. 2 disulfide bridges follow: cysteine 23–cysteine 88 and cysteine 80–glycine 108. The complementarity-determining-1 stretch occupies residues 24–34 (QASQSIYSNLA). Residues 35–49 (WYQZKPGQPPKLLIY) form a framework-2 region. The interval 50-56 (KASTLES) is complementarity-determining-2. A framework-3 region spans residues 57–88 (GVPSRFKGSGSGTDFTLTISDLECADAATYFC). The segment at 89–97 (QGSBYTGTV) is complementarity-determining-3. The segment at 98–107 (FGGGTEVVVK) is framework-4.

This is Ig kappa chain V region BS-5 from Oryctolagus cuniculus (Rabbit).